Here is a 700-residue protein sequence, read N- to C-terminus: Protein claret segregational (700 aa).

Phosphoserine occurs at positions 94 and 96. A disordered region spans residues 141–185; the sequence is APSSITATAVKRPPVTRPAPRAAGGAAAKKPAGTGAAASSGAAAA. Low complexity predominate over residues 149 to 185; that stretch reads AVKRPPVTRPAPRAAGGAAAKKPAGTGAAASSGAAAA. The stretch at 196 to 346 forms a coiled coil; that stretch reads KARFHDLLEK…ELHNTVMDLR (151 aa). The 323-residue stretch at 348-670 folds into the Kinesin motor domain; the sequence is NIRVFCRIRP…LRFAASVNSC (323 aa). 434 to 441 contacts ATP; sequence GQTGSGKT. The tract at residues 664 to 668 is required for minus-end directionality; it reads AASVN. The segment at 681-700 is disordered; the sequence is LNNSVANSSTQSNNSGSFDK.

This sequence belongs to the TRAFAC class myosin-kinesin ATPase superfamily. Kinesin family. NCD subfamily.

The protein resides in the cytoplasm. It is found in the cytoskeleton. The enzyme catalyses ATP + H2O = ADP + phosphate + H(+). In terms of biological role, minus-end-directed microtubule-based motor protein. Has ATPase activity. Required for normal chromosomal segregation in meiosis in females, and in early mitotic divisions of the embryo. The sequence is that of Protein claret segregational (ncd) from Drosophila melanogaster (Fruit fly).